Consider the following 251-residue polypeptide: tRNA (guanine-N(7)-)-methyltransferase (251 aa).

Residues Gly-71, 94–95, 128–129, and Leu-148 each bind S-adenosyl-L-methionine; these read EL and NS. The active site involves Asp-151. 226 to 228 lines the S-adenosyl-L-methionine pocket; sequence TEE.

Belongs to the class I-like SAM-binding methyltransferase superfamily. TrmB family.

The protein localises to the nucleus. It catalyses the reaction guanosine(46) in tRNA + S-adenosyl-L-methionine = N(7)-methylguanosine(46) in tRNA + S-adenosyl-L-homocysteine. Its pathway is tRNA modification; N(7)-methylguanine-tRNA biosynthesis. Catalyzes the formation of N(7)-methylguanine at position 46 (m7G46) in tRNA. The chain is tRNA (guanine-N(7)-)-methyltransferase from Arabidopsis thaliana (Mouse-ear cress).